We begin with the raw amino-acid sequence, 238 residues long: Phosphoribosylaminoimidazole-succinocarboxamide synthase (238 aa).

The protein belongs to the SAICAR synthetase family.

It catalyses the reaction 5-amino-1-(5-phospho-D-ribosyl)imidazole-4-carboxylate + L-aspartate + ATP = (2S)-2-[5-amino-1-(5-phospho-beta-D-ribosyl)imidazole-4-carboxamido]succinate + ADP + phosphate + 2 H(+). Its pathway is purine metabolism; IMP biosynthesis via de novo pathway; 5-amino-1-(5-phospho-D-ribosyl)imidazole-4-carboxamide from 5-amino-1-(5-phospho-D-ribosyl)imidazole-4-carboxylate: step 1/2. The chain is Phosphoribosylaminoimidazole-succinocarboxamide synthase from Persephonella marina (strain DSM 14350 / EX-H1).